The chain runs to 569 residues: Urease subunit alpha (569 aa).

The region spanning 131 to 569 (GGMDAHIHFI…LPMAQRYFLF (439 aa)) is the Urease domain. Residues H136, H138, and K218 each contribute to the Ni(2+) site. The residue at position 218 (K218) is an N6-carboxylysine. H220 is a binding site for substrate. Ni(2+)-binding residues include H247 and H273. H321 acts as the Proton donor in catalysis. Position 361 (D361) interacts with Ni(2+).

The protein belongs to the metallo-dependent hydrolases superfamily. Urease alpha subunit family. Heterotrimer of UreA (gamma), UreB (beta) and UreC (alpha) subunits. Three heterotrimers associate to form the active enzyme. Requires Ni cation as cofactor. Carboxylation allows a single lysine to coordinate two nickel ions.

The protein localises to the cytoplasm. The enzyme catalyses urea + 2 H2O + H(+) = hydrogencarbonate + 2 NH4(+). Its pathway is nitrogen metabolism; urea degradation; CO(2) and NH(3) from urea (urease route): step 1/1. The protein is Urease subunit alpha of Rhizobium rhizogenes (strain K84 / ATCC BAA-868) (Agrobacterium radiobacter).